Reading from the N-terminus, the 373-residue chain is Queuine tRNA-ribosyltransferase (373 aa).

The active-site Proton acceptor is Asp-90. Substrate-binding positions include 90 to 94 (DSGGF), Asp-144, Gln-193, and Gly-220. The tract at residues 251-257 (GVGTPED) is RNA binding. Asp-270 (nucleophile) is an active-site residue. Positions 275–279 (TRNAR) are RNA binding; important for wobble base 34 recognition. Cys-308, Cys-310, Cys-313, and His-339 together coordinate Zn(2+).

This sequence belongs to the queuine tRNA-ribosyltransferase family. Homodimer. Within each dimer, one monomer is responsible for RNA recognition and catalysis, while the other monomer binds to the replacement base PreQ1. The cofactor is Zn(2+).

The catalysed reaction is 7-aminomethyl-7-carbaguanine + guanosine(34) in tRNA = 7-aminomethyl-7-carbaguanosine(34) in tRNA + guanine. It functions in the pathway tRNA modification; tRNA-queuosine biosynthesis. Catalyzes the base-exchange of a guanine (G) residue with the queuine precursor 7-aminomethyl-7-deazaguanine (PreQ1) at position 34 (anticodon wobble position) in tRNAs with GU(N) anticodons (tRNA-Asp, -Asn, -His and -Tyr). Catalysis occurs through a double-displacement mechanism. The nucleophile active site attacks the C1' of nucleotide 34 to detach the guanine base from the RNA, forming a covalent enzyme-RNA intermediate. The proton acceptor active site deprotonates the incoming PreQ1, allowing a nucleophilic attack on the C1' of the ribose to form the product. After dissociation, two additional enzymatic reactions on the tRNA convert PreQ1 to queuine (Q), resulting in the hypermodified nucleoside queuosine (7-(((4,5-cis-dihydroxy-2-cyclopenten-1-yl)amino)methyl)-7-deazaguanosine). This is Queuine tRNA-ribosyltransferase from Campylobacter jejuni subsp. jejuni serotype O:23/36 (strain 81-176).